The chain runs to 232 residues: Cell surface superoxide dismutase [Cu-Zn] 4 (232 aa).

A signal peptide spans 1 to 15; sequence MKYLSIISIVALALA. N53 carries N-linked (GlcNAc...) asparagine glycosylation. Residues H75 and H77 each coordinate Cu cation. N-linked (GlcNAc...) asparagine glycosylation is present at N86. H93 lines the Cu cation pocket. Residue H93 participates in Zn(2+) binding. N98 is a glycosylation site (N-linked (GlcNAc...) asparagine). D113 contacts Zn(2+). The N-linked (GlcNAc...) asparagine glycan is linked to N120. Residue H153 coordinates Cu cation. N156, N164, N182, N193, and N196 each carry an N-linked (GlcNAc...) asparagine glycan. Over residues 174 to 208 the composition is skewed to low complexity; the sequence is TASAATWSNSSSSSSSSSKNSTNGSSGSSTSASQG. Residues 174–211 are disordered; the sequence is TASAATWSNSSSSSSSSSKNSTNGSSGSSTSASQGSGA. S209 is lipidated: GPI-anchor amidated serine. A propeptide spans 210-232 (removed in mature form); it reads GAGRAEISGFLAAGIAGVVAALI. R213 is a substrate binding site.

Belongs to the Cu-Zn superoxide dismutase family. Cu cation is required as a cofactor. Zn(2+) serves as cofactor. Post-translationally, the GPI-anchor is attached to the protein in the endoplasmic reticulum and serves to target the protein to the cell surface. There, the glucosamine-inositol phospholipid moiety is cleaved off and the GPI-modified mannoprotein is covalently attached via its lipidless GPI glycan remnant to the 1,6-beta-glucan of the outer cell wall layer.

Its subcellular location is the secreted. It is found in the cell wall. The protein localises to the membrane. The enzyme catalyses 2 superoxide + 2 H(+) = H2O2 + O2. Superoxide dismutases serve to convert damaging superoxide radicals, a key form of ROS, to less damaging hydrogen peroxide that can be converted into water by catalase action. Degrades host-derived reactive oxygen species to escape innate immune surveillance. Involved in the occurrence of miconazole-tolerant persisters in biofilms. Persisters are cells that survive high doses of an antimicrobial agent. This is Cell surface superoxide dismutase [Cu-Zn] 4 (SOD4) from Candida albicans (strain SC5314 / ATCC MYA-2876) (Yeast).